The primary structure comprises 61 residues: Putative protein RenD (61 aa).

This Escherichia coli (strain K12) protein is Putative protein RenD (renD).